A 480-amino-acid chain; its full sequence is Serralysin (480 aa).

H181 provides a ligand contact to Zn(2+). Residue E182 is part of the active site. Positions 185 and 191 each coordinate Zn(2+). R260, D263, D292, G294, G295, D297, T334, and E336 together coordinate Ca(2+). Hemolysin-type calcium-binding repeat units lie at residues 339 to 356 (IGGS…ANTL) and 357 to 374 (KGGA…ADNL).

Belongs to the peptidase M10B family. Requires Zn(2+) as cofactor. Ca(2+) is required as a cofactor.

The protein resides in the secreted. The enzyme catalyses Preferential cleavage of bonds with hydrophobic residues in P1'.. The chain is Serralysin (prtA) from Photorhabdus laumondii subsp. laumondii (strain DSM 15139 / CIP 105565 / TT01) (Photorhabdus luminescens subsp. laumondii).